Consider the following 326-residue polypeptide: Glutaminase 2 (326 aa).

The substrate site is built by Ser73, Asn125, Glu169, Asn176, Tyr200, Tyr252, and Val270.

It belongs to the glutaminase family. In terms of assembly, homotetramer.

It catalyses the reaction L-glutamine + H2O = L-glutamate + NH4(+). This Bacillus anthracis protein is Glutaminase 2.